The primary structure comprises 224 residues: 7-cyano-7-deazaguanine synthase (224 aa).

8-18 (LSGGMDSAAVI) provides a ligand contact to ATP. Zn(2+) is bound by residues Cys186, Cys196, Cys199, and Cys202.

Belongs to the QueC family. Requires Zn(2+) as cofactor.

It catalyses the reaction 7-carboxy-7-deazaguanine + NH4(+) + ATP = 7-cyano-7-deazaguanine + ADP + phosphate + H2O + H(+). It participates in purine metabolism; 7-cyano-7-deazaguanine biosynthesis. Its function is as follows. Catalyzes the ATP-dependent conversion of 7-carboxy-7-deazaguanine (CDG) to 7-cyano-7-deazaguanine (preQ(0)). The sequence is that of 7-cyano-7-deazaguanine synthase from Xanthomonas euvesicatoria pv. vesicatoria (strain 85-10) (Xanthomonas campestris pv. vesicatoria).